We begin with the raw amino-acid sequence, 445 residues long: Sporulation protein YkvU (445 aa).

Transmembrane regions (helical) follow at residues 7–29 (GIIL…NMIL), 39–61 (GLYM…ELPI), 82–104 (AFRM…LPFI), 109–131 (TYHP…TSIA), 144–166 (IAIA…FQWY), 172–194 (MAVL…YLYS), 237–259 (VNAI…GTAA), 269–291 (VAVT…MIPS), 312–334 (IFIT…GPLT), 349–371 (LLWP…IGMG), 376–395 (AFYH…YVLG), and 400–422 (LQML…LHYA).

The protein resides in the forespore membrane. The chain is Sporulation protein YkvU (ykvU) from Bacillus subtilis (strain 168).